Consider the following 220-residue polypeptide: Dual specificity protein phosphatase 19 (220 aa).

M1 carries the post-translational modification N-acetylmethionine. Residues 64–205 enclose the Tyrosine-protein phosphatase domain; that stretch reads QVGVIKPWLL…LRTYQVGKES (142 aa). C149 (phosphocysteine intermediate) is an active-site residue.

The protein belongs to the protein-tyrosine phosphatase family. Non-receptor class dual specificity subfamily.

It carries out the reaction O-phospho-L-tyrosyl-[protein] + H2O = L-tyrosyl-[protein] + phosphate. The enzyme catalyses O-phospho-L-seryl-[protein] + H2O = L-seryl-[protein] + phosphate. The catalysed reaction is O-phospho-L-threonyl-[protein] + H2O = L-threonyl-[protein] + phosphate. With respect to regulation, phosphatase activity is enhanced by Ca(2+) and Mn(2+). Has a dual specificity toward Ser/Thr and Tyr-containing proteins. This is Dual specificity protein phosphatase 19 from Mus musculus (Mouse).